The following is a 740-amino-acid chain: Eukaryotic translation initiation factor 3 subunit B (740 aa).

Over residues Met1–Glu10 the composition is skewed to polar residues. The tract at residues Met1 to Glu20 is disordered. The 87-residue stretch at Thr40–Asp126 folds into the RRM domain. 6 WD repeats span residues Ala193–Gln230, Pro232–Val289, Glu302–Lys343, Ser455–Ala496, Ile513–Glu556, and Thr571–Ala609. Residues Ala696 to Glu721 form a disordered region.

It belongs to the eIF-3 subunit B family. In terms of assembly, component of the eukaryotic translation initiation factor 3 (eIF-3) complex.

The protein localises to the cytoplasm. Functionally, RNA-binding component of the eukaryotic translation initiation factor 3 (eIF-3) complex, which is involved in protein synthesis of a specialized repertoire of mRNAs and, together with other initiation factors, stimulates binding of mRNA and methionyl-tRNAi to the 40S ribosome. The eIF-3 complex specifically targets and initiates translation of a subset of mRNAs involved in cell proliferation. The chain is Eukaryotic translation initiation factor 3 subunit B (prt1) from Aspergillus fumigatus (strain ATCC MYA-4609 / CBS 101355 / FGSC A1100 / Af293) (Neosartorya fumigata).